The chain runs to 224 residues: UPF0758 protein Tola_0183 (224 aa).

The MPN domain maps to 102–224; the sequence is SLTSPQLVRR…PVSFAERGWL (123 aa). Zn(2+)-binding residues include His173, His175, and Asp186. The JAMM motif signature appears at 173–186; it reads HNHPSGVAEPSHAD.

It belongs to the UPF0758 family.

The polypeptide is UPF0758 protein Tola_0183 (Tolumonas auensis (strain DSM 9187 / NBRC 110442 / TA 4)).